A 274-amino-acid chain; its full sequence is 1D-myo-inositol 2-acetamido-2-deoxy-alpha-D-glucopyranoside deacetylase 2 (274 aa).

Zn(2+)-binding residues include H6, D9, and H140.

This sequence belongs to the MshB deacetylase family. Zn(2+) serves as cofactor.

The catalysed reaction is 1D-myo-inositol 2-acetamido-2-deoxy-alpha-D-glucopyranoside + H2O = 1D-myo-inositol 2-amino-2-deoxy-alpha-D-glucopyranoside + acetate. Its function is as follows. Catalyzes the deacetylation of 1D-myo-inositol 2-acetamido-2-deoxy-alpha-D-glucopyranoside (GlcNAc-Ins) in the mycothiol biosynthesis pathway. The chain is 1D-myo-inositol 2-acetamido-2-deoxy-alpha-D-glucopyranoside deacetylase 2 from Saccharopolyspora erythraea (strain ATCC 11635 / DSM 40517 / JCM 4748 / NBRC 13426 / NCIMB 8594 / NRRL 2338).